The following is a 473-amino-acid chain: Proton-coupled folate transporter (473 aa).

Pro residues predominate over residues 1 to 20 (MAAPSDPPTAATPPAPPPPA). The interval 1–21 (MAAPSDPPTAATPPAPPPPAR) is disordered. Residues 1 to 29 (MAAPSDPPTAATPPAPPPPARRCLLAPSV) are Cytoplasmic-facing. A helical membrane pass occupies residues 30–48 (EPLLFLATLALGLQVPLAT). The Extracellular portion of the chain corresponds to 49 to 90 (QYLWDRLGAERGYVGPNASSPHGCGNGSGAVDPLREEVEALV). Residues asparagine 65 and asparagine 74 are each glycosylated (N-linked (GlcNAc...) asparagine). A disulfide bridge links cysteine 72 with cysteine 306. A helical membrane pass occupies residues 91–116 (AHWNLCINLGGFFVGLFSVTLFGPWS). Asparagine 98 contributes to the pemetrexed binding site. The Cytoplasmic segment spans residues 117–120 (DSVG). Residues 121-143 (RRPVLVLPAVGMAVQAAVYLLVM) form a helical membrane-spanning segment. The Extracellular portion of the chain corresponds to 144–148 (YLRLH). The chain crosses the membrane as a helical span at residues 149–162 (VAYLLLGRIISGLL). Residues 163–185 (GDYNLILAGCFASVADSSNQRTR) lie on the Cytoplasmic side of the membrane. H(+) is bound by residues aspartate 164 and glutamate 193. A helical membrane pass occupies residues 186 to 211 (TFRVAILEACLGVAGMVASVGGGQWR). Residue glutamate 193 participates in pemetrexed binding. Over 212–216 (KAEGY) the chain is Extracellular. A helical transmembrane segment spans residues 217–235 (INPFWLVLAASLAAALYAA). At 236–274 (LCLQETVKQRRAAKLLTLQHYKAVYKLYTAPEDLSSRRK) the chain is on the cytoplasmic side. Residues 275-297 (LALYSLAFFLLVTVHFGTKDLYV) form a helical membrane-spanning segment. H(+) is bound at residue histidine 289. At 298–310 (LYELGSPLCWASD) the chain is on the extracellular side. The chain crosses the membrane as a helical span at residues 311 to 333 (LIGYGSAASYLAYLSSLGGLRLL). Residue tyrosine 323 coordinates pemetrexed. Over 334-339 (QLCLED) the chain is Cytoplasmic. Residues 340 to 359 (TWVAEIGLISNIAGLVVISL) form a helical membrane-spanning segment. Residues 360–363 (ATTT) are Extracellular-facing. Residues 364–384 (PLMFTGYGIMFLSMAATPVIR) form a helical membrane-spanning segment. Residues 385–396 (AKLSKLVGETEQ) lie on the Cytoplasmic side of the membrane. Residues 397 to 422 (GALFASVACVEGLCSLVATGVFNSLY) form a helical membrane-spanning segment. Pemetrexed-binding residues include glutamate 407 and serine 411. Residues 423–430 (PSTLHFMR) are Extracellular-facing. A helical membrane pass occupies residues 431 to 449 (GFPFLFGAILLLIPAAIMG). Residues 450–473 (WIEIQDSNLQYSHFSDASSSPADG) lie on the Cytoplasmic side of the membrane.

This sequence belongs to the major facilitator superfamily. SLC46A family. Monomer. As to expression, widely expressed, including brain, aorta, liver, kidney, spleen, small intestine, pancreas, ovary and testis.

It localises to the cell membrane. It is found in the apical cell membrane. The protein localises to the basolateral cell membrane. The protein resides in the endosome membrane. Its subcellular location is the cytoplasm. The enzyme catalyses folate(in) + H(+)(in) = folate(out) + H(+)(out). The catalysed reaction is (6S)-5-methyl-5,6,7,8-tetrahydrofolate(in) + H(+)(in) = (6S)-5-methyl-5,6,7,8-tetrahydrofolate(out) + H(+)(out). It carries out the reaction methotrexate(in) + H(+)(in) = methotrexate(out) + H(+)(out). It catalyses the reaction pemetrexed(in) + H(+)(in) = pemetrexed(out) + H(+)(out). Proton-coupled folate symporter that mediates folate absorption using an H(+) gradient as a driving force. Involved in the intestinal absorption of folates at the brush-border membrane of the proximal jejunum, and the transport from blood to cerebrospinal fluid across the choroid plexus. Functions at acidic pH via alternate outward- and inward-open conformation states. Protonation of residues in the outward open state primes the protein for transport. Binding of folate promotes breaking of salt bridge network and subsequent closure of the extracellular gate, leading to the inward-open state and release of protons and folate. Also able to transport antifolate drugs, such as methotrexate and pemetrexed. Also acts as a lower-affinity, pH-independent heme carrier protein and constitutes the main importer of heme in the intestine. Imports heme in the retina and retinal pigment epithelium, in neurons of the hippocampus, in hepatocytes and in the renal epithelial cells. The sequence is that of Proton-coupled folate transporter from Gallus gallus (Chicken).